The chain runs to 456 residues: Histidine--tRNA ligase (456 aa).

It belongs to the class-II aminoacyl-tRNA synthetase family. Homodimer.

It is found in the cytoplasm. The enzyme catalyses tRNA(His) + L-histidine + ATP = L-histidyl-tRNA(His) + AMP + diphosphate + H(+). The protein is Histidine--tRNA ligase of Cupriavidus taiwanensis (strain DSM 17343 / BCRC 17206 / CCUG 44338 / CIP 107171 / LMG 19424 / R1) (Ralstonia taiwanensis (strain LMG 19424)).